The chain runs to 96 residues: Aspartyl/glutamyl-tRNA(Asn/Gln) amidotransferase subunit C (96 aa).

It belongs to the GatC family. As to quaternary structure, heterotrimer of A, B and C subunits.

It carries out the reaction L-glutamyl-tRNA(Gln) + L-glutamine + ATP + H2O = L-glutaminyl-tRNA(Gln) + L-glutamate + ADP + phosphate + H(+). It catalyses the reaction L-aspartyl-tRNA(Asn) + L-glutamine + ATP + H2O = L-asparaginyl-tRNA(Asn) + L-glutamate + ADP + phosphate + 2 H(+). Its function is as follows. Allows the formation of correctly charged Asn-tRNA(Asn) or Gln-tRNA(Gln) through the transamidation of misacylated Asp-tRNA(Asn) or Glu-tRNA(Gln) in organisms which lack either or both of asparaginyl-tRNA or glutaminyl-tRNA synthetases. The reaction takes place in the presence of glutamine and ATP through an activated phospho-Asp-tRNA(Asn) or phospho-Glu-tRNA(Gln). In Sulfurovum sp. (strain NBC37-1), this protein is Aspartyl/glutamyl-tRNA(Asn/Gln) amidotransferase subunit C.